A 295-amino-acid chain; its full sequence is Reticulon-like protein 1 (295 aa).

Topologically, residues 1-50 (MSASAQHSQAQQQQQQKSCNCDLLLWRNPVQTGKYFGGSLLALLILKKVN) are cytoplasmic. A Reticulon domain is found at 20–220 (NCDLLLWRNP…ISNLVKSKTA (201 aa)). A helical transmembrane segment spans residues 51 to 73 (LITFFLKVAYTILFTTGSIEFVS). Residues 74-142 (KLFLGQGLIT…ALFLLHKFFS (69 aa)) lie on the Lumenal side of the membrane. Residues 143–163 (WFSIWTIVFVADIFTFTLPVI) form a helical membrane-spanning segment. Over 164–295 (YHSYKHEIDA…LQNELEKNNA (132 aa)) the chain is Cytoplasmic. Thr-186 and Thr-219 each carry phosphothreonine. Polar residues predominate over residues 219 to 235 (TAPVSSTAGPQTASTSK). The tract at residues 219-295 (TAPVSSTAGP…LQNELEKNNA (77 aa)) is disordered. Ser-232 bears the Phosphoserine mark. The stretch at 265–295 (STTQEFNVDELSNELKKSTKNLQNELEKNNA) forms a coiled coil.

Interacts with POM33.

The protein localises to the endoplasmic reticulum membrane. The chain is Reticulon-like protein 1 (RTN1) from Saccharomyces cerevisiae (strain ATCC 204508 / S288c) (Baker's yeast).